The chain runs to 652 residues: Threonine--tRNA ligase (652 aa).

In terms of domain architecture, TGS spans 1-64 (MPDVIRITFP…HEDGELVIIT (64 aa)). Residues 245–542 (DHRKLGKELE…LIEEYKGAFP (298 aa)) form a catalytic region. Positions 338, 389, and 519 each coordinate Zn(2+).

The protein belongs to the class-II aminoacyl-tRNA synthetase family. In terms of assembly, homodimer. Zn(2+) is required as a cofactor.

The protein resides in the cytoplasm. The enzyme catalyses tRNA(Thr) + L-threonine + ATP = L-threonyl-tRNA(Thr) + AMP + diphosphate + H(+). Functionally, catalyzes the attachment of threonine to tRNA(Thr) in a two-step reaction: L-threonine is first activated by ATP to form Thr-AMP and then transferred to the acceptor end of tRNA(Thr). Also edits incorrectly charged L-seryl-tRNA(Thr). The sequence is that of Threonine--tRNA ligase from Geobacillus kaustophilus (strain HTA426).